The primary structure comprises 314 residues: Calcium homeostasis modulator protein 4 (314 aa).

The Cytoplasmic segment spans residues 1–14 (MCPTLNNIVSSLQR). A helical transmembrane segment spans residues 15-37 (NGIFINSLIAALTIGGQQLFSSS). The Extracellular portion of the chain corresponds to 38–48 (TFSCPCQVGKN). 2 disulfide bridges follow: C41–C131 and C43–C162. A helical membrane pass occupies residues 49–71 (FYYGSAFLVIPALILLVAGFALR). Residues 72–103 (SQMWTITGEYCCSCAPPYRRISPLECKLACLR) are Cytoplasmic-facing. A helical transmembrane segment spans residues 104–129 (FFSITGRAVIAPLTWLAVTLLTGTYY). At 130–183 (ECAASEFASVDHYPMFDNVSASKREEILAGFPCCRSAPSDVILVRDEIALLHRY) the chain is on the extracellular side. The helical transmembrane segment at 184–207 (QSQMLGWILITLATIAALVSCCVA) threads the bilayer. Residues 208–314 (KCCSPLTSLQ…DRSRGIELKP (107 aa)) lie on the Cytoplasmic side of the membrane.

The protein belongs to the CALHM family. In terms of assembly, oligomerizes to form decameric and undecameric channels. Two hemichannels can assemble in a tail-to-tail manner to form a gap junction. Placenta.

The protein resides in the cell membrane. Its function is as follows. May assemble to form gap junction channel-like structures involved in intercellular communication. Channel gating and ion conductance are likely regulated by membrane lipids rather than by membrane depolarization or extracellular calcium levels. This is Calcium homeostasis modulator protein 4 from Homo sapiens (Human).